Here is a 195-residue protein sequence, read N- to C-terminus: Nuclear transcription factor Y subunit C-10 (195 aa).

The segment at 1 to 24 (MRRPKSSHVRMEPVAPRSHNTMPM) is disordered.

The protein belongs to the NFYC/HAP5 subunit family. In terms of assembly, heterotrimeric transcription factor composed of three components, NF-YA, NF-YB and NF-YC. NF-YB and NF-YC must interact and dimerize for NF-YA association and DNA binding.

Its subcellular location is the nucleus. Stimulates the transcription of various genes by recognizing and binding to a CCAAT motif in promoters. The polypeptide is Nuclear transcription factor Y subunit C-10 (NFYC10) (Arabidopsis thaliana (Mouse-ear cress)).